Consider the following 66-residue polypeptide: MKTSVLFVIFGLALLFCLSFADELEDTGRQCGEFMWKCGAGKPTCCSGYDCSPTWKWCVLKSPGRR.

The first 21 residues, 1-21, serve as a signal peptide directing secretion; that stretch reads MKTSVLFVIFGLALLFCLSFA. The propeptide occupies 22-29; the sequence is DELEDTGR. Intrachain disulfides connect Cys31-Cys46, Cys38-Cys51, and Cys45-Cys58.

This sequence belongs to the neurotoxin 10 (Hwtx-1) family. 29 (Jztx-13) subfamily. Expressed by the venom gland.

The protein localises to the secreted. Probable ion channel inhibitor. The sequence is that of U10-theraphotoxin-Cg1a 3 from Chilobrachys guangxiensis (Chinese earth tiger tarantula).